The following is a 525-amino-acid chain: Membrane-bound lytic murein transglycosylase F (525 aa).

Positions methionine 1 to alanine 24 are cleaved as a signal peptide. Residues cysteine 25–isoleucine 284 form a non-LT domain region. Residues alanine 286–glutamate 525 form an LT domain region. Residue glutamate 329 is part of the active site. The tract at residues valine 506–glutamate 525 is disordered. Acidic residues predominate over residues asparagine 514–glutamate 525.

It in the N-terminal section; belongs to the bacterial solute-binding protein 3 family. This sequence in the C-terminal section; belongs to the transglycosylase Slt family.

It localises to the cell outer membrane. It carries out the reaction Exolytic cleavage of the (1-&gt;4)-beta-glycosidic linkage between N-acetylmuramic acid (MurNAc) and N-acetylglucosamine (GlcNAc) residues in peptidoglycan, from either the reducing or the non-reducing ends of the peptidoglycan chains, with concomitant formation of a 1,6-anhydrobond in the MurNAc residue.. Functionally, murein-degrading enzyme that degrades murein glycan strands and insoluble, high-molecular weight murein sacculi, with the concomitant formation of a 1,6-anhydromuramoyl product. Lytic transglycosylases (LTs) play an integral role in the metabolism of the peptidoglycan (PG) sacculus. Their lytic action creates space within the PG sacculus to allow for its expansion as well as for the insertion of various structures such as secretion systems and flagella. This Vibrio parahaemolyticus serotype O3:K6 (strain RIMD 2210633) protein is Membrane-bound lytic murein transglycosylase F.